The primary structure comprises 73 residues: Large ribosomal subunit protein bL31 (73 aa).

Belongs to the bacterial ribosomal protein bL31 family. Type A subfamily. As to quaternary structure, part of the 50S ribosomal subunit.

Binds the 23S rRNA. The chain is Large ribosomal subunit protein bL31 from Rhizobium rhizogenes (strain K84 / ATCC BAA-868) (Agrobacterium radiobacter).